A 191-amino-acid polypeptide reads, in one-letter code: Lipopolysaccharide export system protein LptC (191 aa).

A helical membrane pass occupies residues 7-25; sequence WVIIVLSLAVLVMIGINMA.

It belongs to the LptC family. As to quaternary structure, component of the lipopolysaccharide transport and assembly complex. Interacts with LptA and the LptBFG transporter complex.

Its subcellular location is the cell inner membrane. Its function is as follows. Involved in the assembly of lipopolysaccharide (LPS). Required for the translocation of LPS from the inner membrane to the outer membrane. Facilitates the transfer of LPS from the inner membrane to the periplasmic protein LptA. Could be a docking site for LptA. This Escherichia coli O157:H7 protein is Lipopolysaccharide export system protein LptC.